A 208-amino-acid chain; its full sequence is MEGKFITFEGIDGSGKTSVLKGVIEHLNDKRIDNYIWTREPGGNRISEAIRKIILNVEYTEMDARTEALLYAAARRQHLVDTVLPALNEGKLVLCDRFVDSSVVYQGVARDIGVEPVIKLNEFATENLKPDLTLYYDVEPEISLKRISNNRQNQVDRLDKESMDFYHKVRQAYLSLAESNKERIKVIDASQNLDKVIDDTLSILNNFM.

An ATP-binding site is contributed by 10–17 (GIDGSGKT).

This sequence belongs to the thymidylate kinase family.

It carries out the reaction dTMP + ATP = dTDP + ADP. Its function is as follows. Phosphorylation of dTMP to form dTDP in both de novo and salvage pathways of dTTP synthesis. In Ligilactobacillus salivarius (strain UCC118) (Lactobacillus salivarius), this protein is Thymidylate kinase.